A 234-amino-acid chain; its full sequence is uncharacterized protein (234 aa).

Positions V24–T83 constitute an HTH tetR-type domain. The H-T-H motif DNA-binding region spans S46 to F65.

This is an uncharacterized protein from Mycobacterium tuberculosis (strain CDC 1551 / Oshkosh).